A 392-amino-acid chain; its full sequence is Nicotinate phosphoribosyltransferase (392 aa).

His-216 is modified (phosphohistidine; by autocatalysis).

Belongs to the NAPRTase family. In terms of processing, transiently phosphorylated on a His residue during the reaction cycle. Phosphorylation strongly increases the affinity for substrates and increases the rate of nicotinate D-ribonucleotide production. Dephosphorylation regenerates the low-affinity form of the enzyme, leading to product release.

It catalyses the reaction nicotinate + 5-phospho-alpha-D-ribose 1-diphosphate + ATP + H2O = nicotinate beta-D-ribonucleotide + ADP + phosphate + diphosphate. It participates in cofactor biosynthesis; NAD(+) biosynthesis; nicotinate D-ribonucleotide from nicotinate: step 1/1. Its function is as follows. Catalyzes the synthesis of beta-nicotinate D-ribonucleotide from nicotinate and 5-phospho-D-ribose 1-phosphate at the expense of ATP. The chain is Nicotinate phosphoribosyltransferase from Cupriavidus necator (strain ATCC 17699 / DSM 428 / KCTC 22496 / NCIMB 10442 / H16 / Stanier 337) (Ralstonia eutropha).